Reading from the N-terminus, the 129-residue chain is Small ribosomal subunit protein uS8 (129 aa).

It belongs to the universal ribosomal protein uS8 family. Part of the 30S ribosomal subunit.

Functionally, one of the primary rRNA binding proteins, it binds directly to 16S rRNA central domain where it helps coordinate assembly of the platform of the 30S subunit. The polypeptide is Small ribosomal subunit protein uS8 (Thermofilum pendens (strain DSM 2475 / Hrk 5)).